Consider the following 412-residue polypeptide: Peptidase T (412 aa).

Residue His-83 participates in Zn(2+) binding. Asp-85 is a catalytic residue. Asp-145 contacts Zn(2+). The active-site Proton acceptor is Glu-179. Positions 180, 202, and 384 each coordinate Zn(2+).

It belongs to the peptidase M20B family. Requires Zn(2+) as cofactor.

The protein resides in the cytoplasm. The enzyme catalyses Release of the N-terminal residue from a tripeptide.. In terms of biological role, cleaves the N-terminal amino acid of tripeptides. The sequence is that of Peptidase T from Fusobacterium nucleatum subsp. nucleatum (strain ATCC 25586 / DSM 15643 / BCRC 10681 / CIP 101130 / JCM 8532 / KCTC 2640 / LMG 13131 / VPI 4355).